The following is a 286-amino-acid chain: uncharacterized protein (286 aa).

It belongs to the chlamydial CPn_0389/CT_041/TC_0311 family.

This is an uncharacterized protein from Chlamydia muridarum (strain MoPn / Nigg).